Consider the following 149-residue polypeptide: Transcriptional repressor NrdR (149 aa).

Residues 3–34 fold into a zinc finger; that stretch reads CPFCSATDTKVIDSRLVADGHQVRRRRECTLC. Residues 49-139 enclose the ATP-cone domain; the sequence is PRVIKRDDTR…VYRAFEDVSQ (91 aa).

Belongs to the NrdR family. Requires Zn(2+) as cofactor.

Negatively regulates transcription of bacterial ribonucleotide reductase nrd genes and operons by binding to NrdR-boxes. In Shewanella denitrificans (strain OS217 / ATCC BAA-1090 / DSM 15013), this protein is Transcriptional repressor NrdR.